The following is a 275-amino-acid chain: Ribosomal RNA small subunit methyltransferase A (275 aa).

6 residues coordinate S-adenosyl-L-methionine: N28, L30, G55, E77, D103, and N123.

Belongs to the class I-like SAM-binding methyltransferase superfamily. rRNA adenine N(6)-methyltransferase family. RsmA subfamily.

The protein resides in the cytoplasm. It catalyses the reaction adenosine(1518)/adenosine(1519) in 16S rRNA + 4 S-adenosyl-L-methionine = N(6)-dimethyladenosine(1518)/N(6)-dimethyladenosine(1519) in 16S rRNA + 4 S-adenosyl-L-homocysteine + 4 H(+). Its function is as follows. Specifically dimethylates two adjacent adenosines (A1518 and A1519) in the loop of a conserved hairpin near the 3'-end of 16S rRNA in the 30S particle. May play a critical role in biogenesis of 30S subunits. This is Ribosomal RNA small subunit methyltransferase A from Allorhizobium ampelinum (strain ATCC BAA-846 / DSM 112012 / S4) (Agrobacterium vitis (strain S4)).